Reading from the N-terminus, the 115-residue chain is Ribosome-binding factor A (115 aa).

Belongs to the RbfA family. Monomer. Binds 30S ribosomal subunits, but not 50S ribosomal subunits or 70S ribosomes.

The protein resides in the cytoplasm. Functionally, one of several proteins that assist in the late maturation steps of the functional core of the 30S ribosomal subunit. Associates with free 30S ribosomal subunits (but not with 30S subunits that are part of 70S ribosomes or polysomes). Required for efficient processing of 16S rRNA. May interact with the 5'-terminal helix region of 16S rRNA. This is Ribosome-binding factor A from Streptococcus gordonii (strain Challis / ATCC 35105 / BCRC 15272 / CH1 / DL1 / V288).